The sequence spans 353 residues: Protein U67 (353 aa).

It belongs to the herpesviridae UL95 family.

This is Protein U67 (U67) from Human herpesvirus 6A (strain Uganda-1102) (HHV-6 variant A).